The following is a 618-amino-acid chain: MILQNKTFDLNPNDIAGLELVCQTLRNRILEVVSANGGHLSSSLGAVELIVGMHALFDCQKNPFIFDTSHQAYAHKLLTGRFESFSTLRQFQGLSGFTKPSESAYDYFIAGHSSTSVSIGVGVAKAFRLKQTLGMPIALLGDGSISAGIFYEALNELGDRKYPMIMILNDNEMSISTPIGALSKALSQLMKGPFYQSFRSKVKKILSTLPESVNYLASRFEESFKLITPGVFFEELGINYIGPINGHDLGTIIETLKLAKELKEPVLIHAQTLKGKGYKIAEGRYEKWHGVGPFDLDTGLSKKSKSATLSPTEAYSNTLLELAKKDEKIVGVTAAMPSGTGLDKLIDAYPLRFFDVAIAEQHALTSSSAMAKEGFKPFVSIYSTFLQRAYDSIVHDACISSLPIKLAIDRAGIVGEDGETHQGLLDVSYLRSIPNMVIFAPRDNETLKNAVYFANEHDSSPCAFRYPRGSFALKEGVFEPSGFVLGRSELLKKEGEILLIGYGNGVGRAHLVQLALKEKNIECALLDLRFLKPLDHNLSAIIAPYQKLYVFSDNYKLGGVASAILEFLSEQNILKPVKSFEITDEFIMHGNTALVEKSLGLDTESLTDAILKDLGQER.

Thiamine diphosphate-binding positions include H70 and G111–S113. Residue D142 coordinates Mg(2+). Thiamine diphosphate-binding positions include G143 to S144, N171, Y278, and E360. N171 lines the Mg(2+) pocket.

It belongs to the transketolase family. DXPS subfamily. In terms of assembly, homodimer. The cofactor is Mg(2+). Requires thiamine diphosphate as cofactor.

The catalysed reaction is D-glyceraldehyde 3-phosphate + pyruvate + H(+) = 1-deoxy-D-xylulose 5-phosphate + CO2. It participates in metabolic intermediate biosynthesis; 1-deoxy-D-xylulose 5-phosphate biosynthesis; 1-deoxy-D-xylulose 5-phosphate from D-glyceraldehyde 3-phosphate and pyruvate: step 1/1. Its function is as follows. Catalyzes the acyloin condensation reaction between C atoms 2 and 3 of pyruvate and glyceraldehyde 3-phosphate to yield 1-deoxy-D-xylulose-5-phosphate (DXP). This chain is 1-deoxy-D-xylulose-5-phosphate synthase, found in Helicobacter pylori (strain J99 / ATCC 700824) (Campylobacter pylori J99).